Reading from the N-terminus, the 80-residue chain is D-alanyl carrier protein (80 aa).

A Carrier domain is found at 1 to 77 (MDIQKQIVDI…KLVEQVKKLQ (77 aa)). Ser35 is modified (O-(pantetheine 4'-phosphoryl)serine).

It belongs to the DltC family. 4'-phosphopantetheine is transferred from CoA to a specific serine of apo-DCP.

The protein resides in the cytoplasm. It functions in the pathway cell wall biogenesis; lipoteichoic acid biosynthesis. Carrier protein involved in the D-alanylation of lipoteichoic acid (LTA). The loading of thioester-linked D-alanine onto DltC is catalyzed by D-alanine--D-alanyl carrier protein ligase DltA. The DltC-carried D-alanyl group is further transferred to cell membrane phosphatidylglycerol (PG) by forming an ester bond, probably catalyzed by DltD. D-alanylation of LTA plays an important role in modulating the properties of the cell wall in Gram-positive bacteria, influencing the net charge of the cell wall. This chain is D-alanyl carrier protein, found in Lactobacillus delbrueckii subsp. bulgaricus (strain ATCC 11842 / DSM 20081 / BCRC 10696 / JCM 1002 / NBRC 13953 / NCIMB 11778 / NCTC 12712 / WDCM 00102 / Lb 14).